The following is a 337-amino-acid chain: MLTDIALDAWGSDKAPEPEIKGAILACRHLPVRVHLVGQQDVLEPLLAQALRGARLPIEIVHASERIAMDEKAAQAVRTKRDSSMRVGLKLVREKKVAGFFTAGNTGAAMATAKMVLGALPGVDRPALALAVPTLTGPTILLDVGANTDCKAHNLEQFAVMGEMYARKVLKVDRPRVGILSVGEEEGKGNDLTREAFPLIKALPLNFIGNVEGRDIYNGHCDVIVCDGFVGNVALKTSEGILKLVREMLKISLKSTVTAQVGALLSRRAFDEFKRRLDPSEYGGTPLLGVRGVCIIGHGSSNDRAIMNGIRVAAEFATAGVNQQLEADFAAPADSHA.

The protein belongs to the PlsX family. In terms of assembly, homodimer. Probably interacts with PlsY.

It localises to the cytoplasm. It catalyses the reaction a fatty acyl-[ACP] + phosphate = an acyl phosphate + holo-[ACP]. It functions in the pathway lipid metabolism; phospholipid metabolism. Its function is as follows. Catalyzes the reversible formation of acyl-phosphate (acyl-PO(4)) from acyl-[acyl-carrier-protein] (acyl-ACP). This enzyme utilizes acyl-ACP as fatty acyl donor, but not acyl-CoA. This chain is Phosphate acyltransferase, found in Acidobacterium capsulatum (strain ATCC 51196 / DSM 11244 / BCRC 80197 / JCM 7670 / NBRC 15755 / NCIMB 13165 / 161).